A 534-amino-acid polypeptide reads, in one-letter code: Coiled-coil domain-containing protein 183 (534 aa).

Coiled coils occupy residues 10 to 54, 136 to 209, and 321 to 406; these read EAQI…NLRR, DATK…DMTV, and RFLA…LLVI.

This Mus musculus (Mouse) protein is Coiled-coil domain-containing protein 183 (Ccdc183).